Here is a 206-residue protein sequence, read N- to C-terminus: Hypoxanthine-guanine phosphoribosyltransferase (206 aa).

Residues 110–118, K154, and 181–187 each bind GMP; these read DEVDDTRTT and WIMYPWE. The active-site Proton acceptor is D114.

This sequence belongs to the purine/pyrimidine phosphoribosyltransferase family. In terms of assembly, dimer. Requires Mg(2+) as cofactor.

It localises to the endoplasmic reticulum. The catalysed reaction is IMP + diphosphate = hypoxanthine + 5-phospho-alpha-D-ribose 1-diphosphate. It catalyses the reaction GMP + diphosphate = guanine + 5-phospho-alpha-D-ribose 1-diphosphate. In terms of biological role, converts guanine to guanosine monophosphate, and hypoxanthine to inosine monophosphate. Transfers the 5-phosphoribosyl group from 5-phosphoribosylpyrophosphate onto the purine. Plays a central role in the generation of purine nucleotides through the purine salvage pathway. The polypeptide is Hypoxanthine-guanine phosphoribosyltransferase (hpt1) (Schizosaccharomyces pombe (strain 972 / ATCC 24843) (Fission yeast)).